We begin with the raw amino-acid sequence, 980 residues long: MTTLASSYDPSSFESRLYAQWEAAGYFVPSDTGEPYTVLLPPPNVTGTLHMGHAFQQTLMDALVRYHRMRGYDTLWQVGTDHAGIATEMVVSRNLALEGKGETRDSLGREGFIAKVWEWKAASGDTIERQMRRLGTSSDWSRSTFTMDPQPSAAVNEAFVRWYEQGLIYRGQRLVNWDPVLKTAISDLEVENVEEDGFLWSIRYPLADGVTYEHIEHDADGNETLRETRDYLVVATTRPETMLGDTAVMVHPEDARYLTLHTARIVLPLTGRHVPVITDDYVDRAFGTGVVKVTPAHDFNDYQVGERHNLPLVNLFTADAKIIDPRKQYPDDESPFVNAGIDWRELDQIQRKRLGQHLAYKIPAQYIGLDRYDARKLVLSELEDLSILVETKPHKLQVPRGDRTGQVIEPYLTDQWFVKMDALAKRGLELVESGQIQFVPPNWINTYRHWMENIQDWCISRQLWWGHRIPAWFDDAGHCHVGHDEAEVRAKHGLGAEIALHQDSDVLETWFSSQLWPFSTLGWPDSQAMAERGFARYLPSSVLVTGFDIIFFWVARMIMATDSFTGQVPFRDVYITGLIRDAQGQKMSKSKGNVLDPLDIIDGISIEDLVAKRTNGLMQPRMAEKIEKATRKEFPDGIIAHGADALRFTIAALATHGRDIKFDLGRAEGYKNFCNKLWNATRFVLMNTEGARFTGVPQPRTEAEKWILARLDKVTAETHAHYANYRFDLLAQSLYEFAWNAFCDWFVELAKPALNNQDTDAAASTRHTLLYVLESLLRLLHPLTPFVTEELWQQVVPRLGITTATISLQRFPQVGDVDTSGYATAEADVEWLKSMVSALRRVRSELNVPPSKQVRLLLQADTADERPRVARFASQLSFLLKLERIDWLDAGQDTPPSAAAIVGELTLLVPLEGLVDMDAERMRLDKEIKRVKGEIGKCNGKLGNATFVQNAPAVVVDQERARLADWTTQLAGLREQRGKL.

The 'HIGH' region motif lies at 43 to 53 (PNVTGTLHMGH). Positions 586–590 (KMSKS) match the 'KMSKS' region motif. ATP is bound at residue K589. Residues 914–980 (LVDMDAERMR…AGLREQRGKL (67 aa)) adopt a coiled-coil conformation.

The protein belongs to the class-I aminoacyl-tRNA synthetase family. ValS type 1 subfamily. In terms of assembly, monomer.

The protein resides in the cytoplasm. The enzyme catalyses tRNA(Val) + L-valine + ATP = L-valyl-tRNA(Val) + AMP + diphosphate. Catalyzes the attachment of valine to tRNA(Val). As ValRS can inadvertently accommodate and process structurally similar amino acids such as threonine, to avoid such errors, it has a 'posttransfer' editing activity that hydrolyzes mischarged Thr-tRNA(Val) in a tRNA-dependent manner. This is Valine--tRNA ligase from Xanthomonas oryzae pv. oryzae (strain PXO99A).